A 336-amino-acid chain; its full sequence is N6-methyladenosine RNA methyltransferase MTA1 (336 aa).

The segment at 61–83 (LISSEPPHLPFKTPEPKAGSGGL) is disordered.

This sequence belongs to the MT-A70-like family.

It carries out the reaction an adenosine in mRNA + S-adenosyl-L-methionine = an N(6)-methyladenosine in mRNA + S-adenosyl-L-homocysteine + H(+). N6-methyladenosine RNA methyltransferase that plays a crucial role in fungal phenotypic traits, virulence, and stress tolerance. Mediates the methylation of mRNAs to produce N6-methyladenosine (m6A)-containing mRNAs. M6A is a modification present at internal sites of mRNAs and some non-coding RNAs and plays a role in mRNA stability and processing. Mediates specifically acid phosphatase APHA mRNA stability through a YTHDF1-dependent m6A modification of the A1306, A1341, and A1666 key methylation modification sites. Also mediates the stability of the transcription factor ZAP1 mRNA via modification of residue A1935 localized in the 3'UTR. In Cryphonectria parasitica (strain ATCC 38755 / EP155), this protein is N6-methyladenosine RNA methyltransferase MTA1.